A 671-amino-acid polypeptide reads, in one-letter code: UvrABC system protein B (671 aa).

The 389-residue stretch at 26-414 (EGLENGLAHQ…GGDIIEQVVR (389 aa)) folds into the Helicase ATP-binding domain. ATP is bound at residue 39 to 46 (GVTGSGKT). The Beta-hairpin signature appears at 92-115 (YYDYYQPEAYVPSSDTFIEKDASV). A Helicase C-terminal domain is found at 431-593 (QVDDLLSEIR…IIPQGLNKKI (163 aa)). Residues 631-666 (DQKIRELEAKMYTYAQNLEFEQAAELRDQVHQLRQQ) form the UVR domain.

This sequence belongs to the UvrB family. Forms a heterotetramer with UvrA during the search for lesions. Interacts with UvrC in an incision complex.

It localises to the cytoplasm. Its function is as follows. The UvrABC repair system catalyzes the recognition and processing of DNA lesions. A damage recognition complex composed of 2 UvrA and 2 UvrB subunits scans DNA for abnormalities. Upon binding of the UvrA(2)B(2) complex to a putative damaged site, the DNA wraps around one UvrB monomer. DNA wrap is dependent on ATP binding by UvrB and probably causes local melting of the DNA helix, facilitating insertion of UvrB beta-hairpin between the DNA strands. Then UvrB probes one DNA strand for the presence of a lesion. If a lesion is found the UvrA subunits dissociate and the UvrB-DNA preincision complex is formed. This complex is subsequently bound by UvrC and the second UvrB is released. If no lesion is found, the DNA wraps around the other UvrB subunit that will check the other stand for damage. This Yersinia pestis protein is UvrABC system protein B.